Here is a 179-residue protein sequence, read N- to C-terminus: ATP synthase subunit delta (179 aa).

It belongs to the ATPase delta chain family. F-type ATPases have 2 components, F(1) - the catalytic core - and F(0) - the membrane proton channel. F(1) has five subunits: alpha(3), beta(3), gamma(1), delta(1), epsilon(1). F(0) has three main subunits: a(1), b(2) and c(10-14). The alpha and beta chains form an alternating ring which encloses part of the gamma chain. F(1) is attached to F(0) by a central stalk formed by the gamma and epsilon chains, while a peripheral stalk is formed by the delta and b chains.

Its subcellular location is the cell inner membrane. Its function is as follows. F(1)F(0) ATP synthase produces ATP from ADP in the presence of a proton or sodium gradient. F-type ATPases consist of two structural domains, F(1) containing the extramembraneous catalytic core and F(0) containing the membrane proton channel, linked together by a central stalk and a peripheral stalk. During catalysis, ATP synthesis in the catalytic domain of F(1) is coupled via a rotary mechanism of the central stalk subunits to proton translocation. In terms of biological role, this protein is part of the stalk that links CF(0) to CF(1). It either transmits conformational changes from CF(0) to CF(1) or is implicated in proton conduction. This is ATP synthase subunit delta from Burkholderia cenocepacia (strain ATCC BAA-245 / DSM 16553 / LMG 16656 / NCTC 13227 / J2315 / CF5610) (Burkholderia cepacia (strain J2315)).